A 480-amino-acid chain; its full sequence is Major facilitator superfamily domain-containing protein 12 (480 aa).

Met-1 bears the N-acetylmethionine mark. The Cytoplasmic segment spans residues 1 to 26 (MGPGPPAAGAAPSPRPLSLVARLSYA). Residues 27-47 (VGHFLNDLCASMWFTYLLLYL) form a helical membrane-spanning segment. The Lumenal portion of the chain corresponds to 48 to 56 (HSVRAYSSR). A helical transmembrane segment spans residues 57–77 (GAGLLLLLGQVADGLCTPLVG). Over 78 to 97 (YEADRAASCCARYGPRKAWH) the chain is Cytoplasmic. The chain crosses the membrane as a helical span at residues 98–118 (LVGTVCVLLSFPFIFSPCLGC). Over 119–124 (GAATPE) the chain is Lumenal. A helical transmembrane segment spans residues 125–145 (WAALLYYGPFIVIFQFGWAST). Topologically, residues 146-170 (QISHLSLIPELVTNDHEKVELTALR) are cytoplasmic. A helical transmembrane segment spans residues 171-191 (YAFTVVANITVYGAAWLLLHL). Residues 192–218 (QGSSRVEPTQDISISDQLGGQDVPVFR) lie on the Lumenal side of the membrane. A helical membrane pass occupies residues 219 to 239 (NLSLLVVGVGAVFSLLFHLGT). Topologically, residues 240 to 279 (RERRRPHAEEPGEHTPLLAPATAQPLLLWKHWLREPAFYQ) are cytoplasmic. Thr-254 bears the Phosphothreonine; by MTOR mark. Residues 280-302 (VGILYMTTRLIVNLSQTYMAMYL) traverse the membrane as a helical segment. The Lumenal segment spans residues 303 to 310 (TYSLHLPK). A helical membrane pass occupies residues 311-331 (KFIATIPLVMYLSGFLSSFLM). At 332–347 (KPINKCIGRNMTYFSG) the chain is on the cytoplasmic side. 2 helical membrane passes run 348 to 368 (LLVILAFAAWVALAEGLGVAV) and 369 to 389 (YAAAVLLGAGCATILVTSLAM). Residues 390-402 (TADLIGPHTNSGA) are Cytoplasmic-facing. Residues 403–423 (FVYGSMSFLDKVANGLAVMAI) traverse the membrane as a helical segment. The Lumenal portion of the chain corresponds to 424–446 (QSLHPCPSELCCRACVSFYHWAM). Residues 447–467 (VAVTGGVGVAAALCLCSLLLW) form a helical membrane-spanning segment. Residues 468–480 (PTRLRRWDRDARP) are Cytoplasmic-facing.

The protein belongs to the major facilitator superfamily. In terms of processing, phosphorylation at Thr-254 by MTOR via mTORC1 pathway promotes cysteine transport in lysosomes, thereby regulating lysosomal cysteine and cystine storage and redox homeostasis. As to expression, widely expressed, with high expression in primary melanocytes.

Its subcellular location is the melanosome membrane. It localises to the lysosome membrane. The catalysed reaction is L-cysteine(in) = L-cysteine(out). Functionally, transporter that mediates the import of cysteine into melanosomes, thereby regulating skin pigmentation. In melanosomes, cysteine import is required both for normal levels of cystine, the oxidized dimer of cysteine, and provide cysteine for the production of the cysteinyldopas used in pheomelanin synthesis, thereby regulating skin pigmentation. Also catalyzes import of cysteine into lysosomes in non-pigmented cells, regulating lysosomal cystine and cysteine storage, which is essnetial for redox homeostasis. This chain is Major facilitator superfamily domain-containing protein 12, found in Homo sapiens (Human).